A 137-amino-acid chain; its full sequence is Basic phospholipase A2 3 (137 aa).

The first 11 residues, 1–11, serve as a signal peptide directing secretion; that stretch reads LVAVCVSLLGA. The propeptide occupies 12–19; that stretch reads ANIPPQPL. Intrachain disulfides connect C30–C89, C44–C136, C46–C62, C61–C117, C68–C110, C78–C103, and C96–C108. Residues Y45, G47, and G49 each coordinate Ca(2+). H65 is a catalytic residue. D66 is a Ca(2+) binding site. D111 is a catalytic residue.

The protein belongs to the phospholipase A2 family. Group I subfamily. D49 sub-subfamily. Monomer, or homotrimer. Was firstly described as a trimer, but has been reinterpreted with the possibility of being a monomer. Ca(2+) is required as a cofactor. Expressed by the venom gland.

Its subcellular location is the secreted. It catalyses the reaction a 1,2-diacyl-sn-glycero-3-phosphocholine + H2O = a 1-acyl-sn-glycero-3-phosphocholine + a fatty acid + H(+). Its function is as follows. Snake venom phospholipase A2 (PLA2) that shows anticoagulant and neurotoxic activities. PLA2 catalyzes the calcium-dependent hydrolysis of the 2-acyl groups in 3-sn-phosphoglycerides. This Bungarus caeruleus (Indian krait) protein is Basic phospholipase A2 3.